A 408-amino-acid chain; its full sequence is PCI domain-containing protein 2 (408 aa).

Alanine 2 bears the N-acetylalanine mark. Serine 45 is modified (phosphoserine). One can recognise a PCI domain in the interval 210–400 (VTYRYYVGRK…QKLVVSKQNP (191 aa)).

This sequence belongs to the CSN12 family. As to quaternary structure, component of the nuclear pore complex (NPC)-associated TREX-2 complex (transcription and export complex 2), composed of at least GANP, 2 copies of ENY2, PCID2, SEM1/DSS1, and either centrin CETN2 or centrin CETN3. The TREX-2 complex also associates with ALYREF/ALY and with the nucleoporin NUP153. Interacts with BRCA2. Interacts with SRCAP chromatin remodeling complex component ZNHIT1; the interaction results in inhibition of SRCAP complex activity, preventing the deposition of histone variant H2AZ1/H2A.Z to lymphoid fate regulator genes and restricting lymphoid lineage commitment.

It localises to the cytoplasm. The protein resides in the nucleus. It is found in the nuclear pore complex. Its function is as follows. Required for B-cell survival through the regulation of the expression of cell-cycle checkpoint MAD2L1 protein during B cell differentiation. As a component of the TREX-2 complex, involved in the export of mRNAs to the cytoplasm through the nuclear pores. Binds and stabilizes BRCA2 and is thus involved in the control of R-loop-associated DNA damage and transcription-associated genomic instability. Blocks the activity of the SRCAP chromatin remodeling complex by interacting with SRCAP complex member ZNHIT1 and inhibiting its interaction with the complex. This prevents the deposition of histone variant H2AZ1/H2A.Z at the nucleosomes of key lymphoid fate regulator genes which suppresses their expression and restricts lymphoid lineage commitment. This chain is PCI domain-containing protein 2 (PCID2), found in Bos taurus (Bovine).